Here is a 425-residue protein sequence, read N- to C-terminus: Trigger factor (425 aa).

In terms of domain architecture, PPIase FKBP-type spans 158–231; it reads GDLVRVNMEV…VEEVYKRTLP (74 aa).

Belongs to the FKBP-type PPIase family. Tig subfamily.

Its subcellular location is the cytoplasm. It catalyses the reaction [protein]-peptidylproline (omega=180) = [protein]-peptidylproline (omega=0). In terms of biological role, involved in protein export. Acts as a chaperone by maintaining the newly synthesized protein in an open conformation. Functions as a peptidyl-prolyl cis-trans isomerase. This is Trigger factor from Thermotoga petrophila (strain ATCC BAA-488 / DSM 13995 / JCM 10881 / RKU-1).